Consider the following 251-residue polypeptide: MHSTLHALPVLQDNVIWIWARGKNAVVVDPAVAEPVNQWLNAHGMCLRAILQTHHHADHIGGTPDLLREWPQAEVVAATADRLRIPLQTRGVADGDVINLLGRRLEVIDVAAHTSAHIAFIIRNDDDQDPSFGPLAFCGDTLFAGGCGRLFEGSAQDMYRALQRFAALPDETLVCCAHEYTEANLRWATEQRPNDVQITTRHQTVKALRSRGDLSLPSSIGAEKRTNLFMQAETAEQLAELRSHKDHWRSS.

Positions 54, 56, 58, 59, 113, 140, and 178 each coordinate Zn(2+).

This sequence belongs to the metallo-beta-lactamase superfamily. Glyoxalase II family. In terms of assembly, monomer. The cofactor is Zn(2+).

It catalyses the reaction an S-(2-hydroxyacyl)glutathione + H2O = a 2-hydroxy carboxylate + glutathione + H(+). Its pathway is secondary metabolite metabolism; methylglyoxal degradation; (R)-lactate from methylglyoxal: step 2/2. Its function is as follows. Thiolesterase that catalyzes the hydrolysis of S-D-lactoyl-glutathione to form glutathione and D-lactic acid. The protein is Hydroxyacylglutathione hydrolase of Synechococcus sp. (strain CC9902).